A 306-amino-acid polypeptide reads, in one-letter code: MEEVLKLKIPASTANLGVGFDSIGMALDKYLHMSIRKIERANWEFLYYSSELEGLPKDENNYIYQTALNVARKYNVTLPSLQIEMRSDIPLARGLGSSASALVGALFIANYFGNIQLSKYELLQLATEIEGHPDNVAPTIYGGLIAGFYNPITKITDVARIEVPHVDIILTIPPYELRTEDSRRVLPDTFSHKGAVQNSAISNTMICALIQHKYKLAGKMMEQDGFHEPYRQHLIPEFNQVRKLSRQHDAYATVISGAGPTILTLCPKEKSGKLVRTLREKINNCASELVTINEIGVKDEVVYLKS.

An ATP-binding site is contributed by 90-100 (PLARGLGSSAS).

It belongs to the GHMP kinase family. Homoserine kinase subfamily.

The protein localises to the cytoplasm. It catalyses the reaction L-homoserine + ATP = O-phospho-L-homoserine + ADP + H(+). It functions in the pathway amino-acid biosynthesis; L-threonine biosynthesis; L-threonine from L-aspartate: step 4/5. Functionally, catalyzes the ATP-dependent phosphorylation of L-homoserine to L-homoserine phosphate. The polypeptide is Homoserine kinase (Staphylococcus epidermidis (strain ATCC 35984 / DSM 28319 / BCRC 17069 / CCUG 31568 / BM 3577 / RP62A)).